The chain runs to 512 residues: Glycerol kinase (512 aa).

Thr13 contributes to the ADP binding site. The ATP site is built by Thr13, Thr14, and Ser15. Thr13 provides a ligand contact to sn-glycerol 3-phosphate. Arg17 serves as a coordination point for ADP. Sn-glycerol 3-phosphate-binding residues include Arg83, Glu84, Tyr135, and Asp252. Arg83, Glu84, Tyr135, Asp252, and Gln253 together coordinate glycerol. ADP-binding residues include Thr274 and Gly318. The ATP site is built by Thr274, Gly318, Gln322, and Gly419. The ADP site is built by Gly419 and Asn423.

Belongs to the FGGY kinase family.

The enzyme catalyses glycerol + ATP = sn-glycerol 3-phosphate + ADP + H(+). The protein operates within polyol metabolism; glycerol degradation via glycerol kinase pathway; sn-glycerol 3-phosphate from glycerol: step 1/1. Its activity is regulated as follows. Inhibited by fructose 1,6-bisphosphate (FBP). Its function is as follows. Key enzyme in the regulation of glycerol uptake and metabolism. Catalyzes the phosphorylation of glycerol to yield sn-glycerol 3-phosphate. The sequence is that of Glycerol kinase from Corynebacterium kroppenstedtii (strain DSM 44385 / JCM 11950 / CIP 105744 / CCUG 35717).